Here is a 344-residue protein sequence, read N- to C-terminus: Envelope glycoprotein M (344 aa).

The Intravirion segment spans residues 1-12; that stretch reads MASSRVDTINLR. A helical membrane pass occupies residues 13-33; that stretch reads IWLVSIICAALSFINVTVHLI. The Virion surface portion of the chain corresponds to 34–76; the sequence is AINFPNLGFPCAYFEINDLKAVNLSANNEIYQMTHQLYINPVQ. The chain crosses the membrane as a helical span at residues 77 to 97; that stretch reads IICYVLIMAILFLLIIIYYIV. Topologically, residues 98–125 are intravirion; it reads CCAKVFSSNKTSNVNQTTRDITWMGDTS. The helical transmembrane segment at 126–146 threads the bilayer; it reads SCFQFILIMDTFQLFVTALSF. Residue arginine 147 is a topological domain, virion surface. A helical membrane pass occupies residues 148–168; that stretch reads LVALGAFAYSIFFVCFTTFNV. Residues 169–203 are Intravirion-facing; sequence TLITQFQSADKSFFAFQKIHPNLKGTVQFKTVVIN. Residues 204 to 224 traverse the membrane as a helical segment; that stretch reads LSELMLGYSTMFLGITTCLGV. Residues 225-238 are Virion surface-facing; that stretch reads GNSIYIRSITVAFS. A helical transmembrane segment spans residues 239–259; that stretch reads SINTFLVMACIYSIVIEAVLV. Residues 260–263 lie on the Intravirion side of the membrane; sequence RYVK. The chain crosses the membrane as a helical span at residues 264 to 284; it reads PLFGYYVGMFCGAVGLSFPIL. The Virion surface portion of the chain corresponds to 285–293; sequence QYETFFESE. Residues 294–314 traverse the membrane as a helical segment; sequence WSTGLIINLSVVAIISIGFII. Residues 315–344 lie on the Intravirion side of the membrane; the sequence is CRLVRYLVKKKRRYKQLLNAESSSLMDENE.

The protein belongs to the herpesviridae glycoprotein M family. In terms of assembly, interacts (via N-terminus) with gN (via N-terminus). The gM-gN heterodimer forms the gCII complex.

It localises to the virion membrane. Its subcellular location is the host Golgi apparatus. The protein localises to the host trans-Golgi network. It is found in the host endosome membrane. The protein resides in the host nucleus inner membrane. Functionally, envelope glycoprotein important for virion assembly and egress. Plays a role in the correct incorporation of gH-gL into virion membrane. Directs the glycoprotein N (gN) to the host trans-Golgi network. This Homo sapiens (Human) protein is Envelope glycoprotein M.